Reading from the N-terminus, the 202-residue chain is Ras-related protein ORAB-1 (202 aa).

GTP is bound by residues 15-23 (GDSGVGKSC), 33-40 (YTESYIST), 63-67 (DTAGQ), 121-124 (NKCD), and 151-153 (SAK). The Effector region motif lies at 37–45 (YISTIGVDF). Residues 173 to 202 (MGPGATSGGSEKSNVNIQSTPVKSSGGGCC) form a disordered region. The span at 180–195 (GGSEKSNVNIQSTPVK) shows a compositional bias: polar residues. Residues C201 and C202 are each lipidated (S-geranylgeranyl cysteine).

This sequence belongs to the small GTPase superfamily. Rab family.

The protein localises to the cell membrane. Functionally, protein transport. Probably involved in vesicular traffic. This chain is Ras-related protein ORAB-1, found in Diplobatis ommata (Ocellated electric ray).